Consider the following 510-residue polypeptide: tRNA(Ile)-lysidine synthase (510 aa).

Residue 32-37 (SGGLDS) participates in ATP binding.

Belongs to the tRNA(Ile)-lysidine synthase family.

The protein resides in the cytoplasm. It carries out the reaction cytidine(34) in tRNA(Ile2) + L-lysine + ATP = lysidine(34) in tRNA(Ile2) + AMP + diphosphate + H(+). Its function is as follows. Ligates lysine onto the cytidine present at position 34 of the AUA codon-specific tRNA(Ile) that contains the anticodon CAU, in an ATP-dependent manner. Cytidine is converted to lysidine, thus changing the amino acid specificity of the tRNA from methionine to isoleucine. The protein is tRNA(Ile)-lysidine synthase of Blochmanniella pennsylvanica (strain BPEN).